Consider the following 318-residue polypeptide: Phosphatidylglycerol--prolipoprotein diacylglyceryl transferase (318 aa).

A run of 3 helical transmembrane segments spans residues 24 to 44, 60 to 80, and 115 to 135; these read GPSTFSILMMIGFLTASYLLP, LLLLGILGTLVGAKIFFVFEI, and LFSGSGLVFYGGFLFGILFIT. Residue arginine 164 participates in a 1,2-diacyl-sn-glycero-3-phospho-(1'-sn-glycerol) binding. Helical transmembrane passes span 198 to 218 and 285 to 305; these read VPVWNTPLIESIISFLFFFYF and GFSQSQLVSIIIILVGAFFIL.

The protein belongs to the Lgt family.

It localises to the cell inner membrane. It carries out the reaction L-cysteinyl-[prolipoprotein] + a 1,2-diacyl-sn-glycero-3-phospho-(1'-sn-glycerol) = an S-1,2-diacyl-sn-glyceryl-L-cysteinyl-[prolipoprotein] + sn-glycerol 1-phosphate + H(+). It functions in the pathway protein modification; lipoprotein biosynthesis (diacylglyceryl transfer). Its function is as follows. Catalyzes the transfer of the diacylglyceryl group from phosphatidylglycerol to the sulfhydryl group of the N-terminal cysteine of a prolipoprotein, the first step in the formation of mature lipoproteins. This Leptospira interrogans serogroup Icterohaemorrhagiae serovar copenhageni (strain Fiocruz L1-130) protein is Phosphatidylglycerol--prolipoprotein diacylglyceryl transferase.